Consider the following 183-residue polypeptide: Shikimate kinase (183 aa).

18–23 (GVGKTT) is an ATP binding site. T22 is a Mg(2+) binding site. Substrate-binding residues include D40, R64, and G86. R125 is a binding site for ATP. Residue R143 coordinates substrate.

This sequence belongs to the shikimate kinase family. As to quaternary structure, monomer. Mg(2+) serves as cofactor.

The protein localises to the cytoplasm. It carries out the reaction shikimate + ATP = 3-phosphoshikimate + ADP + H(+). The protein operates within metabolic intermediate biosynthesis; chorismate biosynthesis; chorismate from D-erythrose 4-phosphate and phosphoenolpyruvate: step 5/7. Catalyzes the specific phosphorylation of the 3-hydroxyl group of shikimic acid using ATP as a cosubstrate. This chain is Shikimate kinase, found in Oceanobacillus iheyensis (strain DSM 14371 / CIP 107618 / JCM 11309 / KCTC 3954 / HTE831).